The following is a 64-amino-acid chain: Large ribosomal subunit protein bL35 (64 aa).

Residues 38–53 (KRKANLNAPKHVHHTN) are compositionally biased toward basic residues. The disordered stretch occupies residues 38-64 (KRKANLNAPKHVHHTNAHSVMSLLCRA).

It belongs to the bacterial ribosomal protein bL35 family.

This chain is Large ribosomal subunit protein bL35, found in Helicobacter pylori (strain G27).